A 173-amino-acid polypeptide reads, in one-letter code: Photosystem I assembly protein Ycf3 (173 aa).

TPR repeat units follow at residues 35–68, 72–105, and 120–153; these read AFSY…EEDP, SYIL…NFKL, and GVQA…APDN.

The protein belongs to the Ycf3 family.

Its subcellular location is the plastid. It localises to the chloroplast thylakoid membrane. In terms of biological role, essential for the assembly of the photosystem I (PSI) complex. May act as a chaperone-like factor to guide the assembly of the PSI subunits. The protein is Photosystem I assembly protein Ycf3 of Porphyra purpurea (Red seaweed).